Reading from the N-terminus, the 239-residue chain is Purine nucleoside phosphorylase DeoD-type (239 aa).

His5 lines the a purine D-ribonucleoside pocket. Residues Gly21, Arg25, Arg44, and Arg88–Ser91 each bind phosphate. A purine D-ribonucleoside contacts are provided by residues Glu180–Glu182 and Ser204–Asp205. Asp205 functions as the Proton donor in the catalytic mechanism.

This sequence belongs to the PNP/UDP phosphorylase family. As to quaternary structure, homohexamer; trimer of homodimers.

The catalysed reaction is a purine D-ribonucleoside + phosphate = a purine nucleobase + alpha-D-ribose 1-phosphate. It catalyses the reaction a purine 2'-deoxy-D-ribonucleoside + phosphate = a purine nucleobase + 2-deoxy-alpha-D-ribose 1-phosphate. Catalyzes the reversible phosphorolytic breakdown of the N-glycosidic bond in the beta-(deoxy)ribonucleoside molecules, with the formation of the corresponding free purine bases and pentose-1-phosphate. The sequence is that of Purine nucleoside phosphorylase DeoD-type from Klebsiella pneumoniae (strain 342).